A 349-amino-acid polypeptide reads, in one-letter code: Isopentenyl-diphosphate delta-isomerase (349 aa).

Arg-12 to Lys-13 is a substrate binding site. Residues Gly-69–Thr-71, Ser-99, and Asn-128 each bind FMN. Gln-158 serves as a coordination point for substrate. Residue Glu-159 coordinates Mg(2+). Residues Lys-189, Ser-214, Thr-219, Gly-265–Arg-267, and Ser-286–Gly-287 each bind FMN.

Belongs to the IPP isomerase type 2 family. In terms of assembly, homooctamer. Dimer of tetramers. It depends on FMN as a cofactor. NADPH is required as a cofactor. Mg(2+) serves as cofactor.

Its subcellular location is the cytoplasm. The enzyme catalyses isopentenyl diphosphate = dimethylallyl diphosphate. Functionally, involved in the biosynthesis of isoprenoids. Catalyzes the 1,3-allylic rearrangement of the homoallylic substrate isopentenyl (IPP) to its allylic isomer, dimethylallyl diphosphate (DMAPP). This is Isopentenyl-diphosphate delta-isomerase from Latilactobacillus sakei subsp. sakei (strain 23K) (Lactobacillus sakei subsp. sakei).